We begin with the raw amino-acid sequence, 516 residues long: Cytochrome P450 1A1 (516 aa).

Positions 25–36 (FRPQVPKGLKSP) are mitochondrial targeting signal. O-linked (GlcNAc) serine glycosylation is present at S63. F220 provides a ligand contact to substrate. Position 453 (C453) interacts with heme.

Belongs to the cytochrome P450 family. Interacts with cytosolic chaperones HSP70 and HSP90; this interaction is required for initial targeting to mitochondria. Interacts (via mitochondrial targeting signal) with TOMM40 (via N-terminus); this interaction is required for translocation across the mitochondrial outer membrane. Requires heme as cofactor. As to expression, constitutively expressed in liver.

Its subcellular location is the endoplasmic reticulum membrane. The protein localises to the mitochondrion inner membrane. The protein resides in the microsome membrane. It localises to the cytoplasm. It carries out the reaction an organic molecule + reduced [NADPH--hemoprotein reductase] + O2 = an alcohol + oxidized [NADPH--hemoprotein reductase] + H2O + H(+). The catalysed reaction is estrone + reduced [NADPH--hemoprotein reductase] + O2 = 2-hydroxyestrone + oxidized [NADPH--hemoprotein reductase] + H2O + H(+). The enzyme catalyses estrone + reduced [NADPH--hemoprotein reductase] + O2 = 4-hydroxyestrone + oxidized [NADPH--hemoprotein reductase] + H2O + H(+). It catalyses the reaction estrone + reduced [NADPH--hemoprotein reductase] + O2 = 6alpha-hydroxyestrone + oxidized [NADPH--hemoprotein reductase] + H2O + H(+). It carries out the reaction estrone + reduced [NADPH--hemoprotein reductase] + O2 = 15alpha-hydroxyestrone + oxidized [NADPH--hemoprotein reductase] + H2O + H(+). The catalysed reaction is estrone + reduced [NADPH--hemoprotein reductase] + O2 = 16alpha-hydroxyestrone + oxidized [NADPH--hemoprotein reductase] + H2O + H(+). The enzyme catalyses 17beta-estradiol + reduced [NADPH--hemoprotein reductase] + O2 = 2-hydroxy-17beta-estradiol + oxidized [NADPH--hemoprotein reductase] + H2O + H(+). It catalyses the reaction 17beta-estradiol + reduced [NADPH--hemoprotein reductase] + O2 = 4-hydroxy-17beta-estradiol + oxidized [NADPH--hemoprotein reductase] + H2O + H(+). It carries out the reaction 17beta-estradiol + reduced [NADPH--hemoprotein reductase] + O2 = 6alpha-hydroxy-17beta-estradiol + oxidized [NADPH--hemoprotein reductase] + H2O + H(+). The catalysed reaction is 17beta-estradiol + reduced [NADPH--hemoprotein reductase] + O2 = 7alpha-hydroxy-17beta-estradiol + oxidized [NADPH--hemoprotein reductase] + H2O + H(+). The enzyme catalyses 17beta-estradiol + reduced [NADPH--hemoprotein reductase] + O2 = 15alpha-hydroxy-17beta-estradiol + oxidized [NADPH--hemoprotein reductase] + H2O + H(+). It catalyses the reaction (5Z,8Z,11Z)-eicosatrienoate + reduced [NADPH--hemoprotein reductase] + O2 = 19-hydroxy-(5Z,8Z,11Z)-eicosatrienoate + oxidized [NADPH--hemoprotein reductase] + H2O + H(+). It carries out the reaction (5Z,8Z,11Z,14Z)-eicosatetraenoate + reduced [NADPH--hemoprotein reductase] + O2 = 16-hydroxy-(5Z,8Z,11Z,14Z)-eicosatetraenoate + oxidized [NADPH--hemoprotein reductase] + H2O + H(+). The catalysed reaction is (5Z,8Z,11Z,14Z)-eicosatetraenoate + reduced [NADPH--hemoprotein reductase] + O2 = 17-hydroxy-(5Z,8Z,11Z,14Z)-eicosatetraenoate + oxidized [NADPH--hemoprotein reductase] + H2O + H(+). The enzyme catalyses (5Z,8Z,11Z,14Z)-eicosatetraenoate + reduced [NADPH--hemoprotein reductase] + O2 = 18-hydroxy-(5Z,8Z,11Z,14Z)-eicosatetraenoate + oxidized [NADPH--hemoprotein reductase] + H2O + H(+). It catalyses the reaction (5Z,8Z,11Z,14Z)-eicosatetraenoate + reduced [NADPH--hemoprotein reductase] + O2 = 19-hydroxy-(5Z,8Z,11Z,14Z)-eicosatetraenoate + oxidized [NADPH--hemoprotein reductase] + H2O + H(+). It carries out the reaction (5Z,8Z,11Z,14Z,17Z)-eicosapentaenoate + reduced [NADPH--hemoprotein reductase] + O2 = 19-hydroxy-(5Z,8Z,11Z,14Z,17Z)-eicosapentaenoate + oxidized [NADPH--hemoprotein reductase] + H2O + H(+). The catalysed reaction is (5Z,8Z,11Z,14Z)-eicosatetraenoate + reduced [NADPH--hemoprotein reductase] + O2 = (8R,9S)-epoxy-(5Z,11Z,14Z)-eicosatrienoate + oxidized [NADPH--hemoprotein reductase] + H2O + H(+). The enzyme catalyses (5Z,8Z,11Z,14Z)-eicosatetraenoate + reduced [NADPH--hemoprotein reductase] + O2 = (11R,12S)-epoxy-(5Z,8Z,14Z)-eicosatrienoate + oxidized [NADPH--hemoprotein reductase] + H2O + H(+). It catalyses the reaction (5Z,8Z,11Z,14Z)-eicosatetraenoate + reduced [NADPH--hemoprotein reductase] + O2 = (14S,15R)-epoxy-(5Z,8Z,11Z)-eicosatrienoate + oxidized [NADPH--hemoprotein reductase] + H2O + H(+). It carries out the reaction (5Z,8Z,11Z,14Z)-eicosatetraenoate + reduced [NADPH--hemoprotein reductase] + O2 = (14R,15S)-epoxy-(5Z,8Z,11Z)-eicosatrienoate + oxidized [NADPH--hemoprotein reductase] + H2O + H(+). The catalysed reaction is (5Z,8Z,11Z,14Z,17Z)-eicosapentaenoate + reduced [NADPH--hemoprotein reductase] + O2 = (17R,18S)-epoxy-(5Z,8Z,11Z,14Z)-eicosatetraenoate + oxidized [NADPH--hemoprotein reductase] + H2O + H(+). The enzyme catalyses (4Z,7Z,10Z,13Z,16Z,19Z)-docosahexaenoate + reduced [NADPH--hemoprotein reductase] + O2 = (19S,20R)-epoxy-(4Z,7Z,10Z,13Z,16Z)-docosapentaenoate + oxidized [NADPH--hemoprotein reductase] + H2O + H(+). It catalyses the reaction (4Z,7Z,10Z,13Z,16Z,19Z)-docosahexaenoate + reduced [NADPH--hemoprotein reductase] + O2 = (19R,20S)-epoxy-(4Z,7Z,10Z,13Z,16Z)-docosapentaenoate + oxidized [NADPH--hemoprotein reductase] + H2O + H(+). It carries out the reaction all-trans-retinol + reduced [NADPH--hemoprotein reductase] + O2 = all-trans-retinal + oxidized [NADPH--hemoprotein reductase] + 2 H2O + H(+). The catalysed reaction is all-trans-retinal + reduced [NADPH--hemoprotein reductase] + O2 = all-trans-retinoate + oxidized [NADPH--hemoprotein reductase] + H2O + 2 H(+). The enzyme catalyses (13S)-hydroperoxy-(9Z,11E)-octadecadienoate = 13-oxo-(9Z,11E)-octadecadienoate + H2O. It catalyses the reaction (12S)-hydroperoxy-(5Z,8Z,10E,14Z)-eicosatetraenoate = 12-oxo-(5Z,8Z,10E,14Z)-eicosatetraenoate + H2O. It carries out the reaction (15S)-hydroperoxy-(5Z,8Z,11Z,13E)-eicosatetraenoate = 15-oxo-(5Z,8Z,11Z,13E)-eicosatetraenoate + H2O. The catalysed reaction is (5S)-hydroperoxy-(6E,8Z,11Z,14Z)-eicosatetraenoate = 5-oxo-(6E,8Z,11Z,14Z)-eicosatetraenoate + H2O. The protein operates within steroid hormone biosynthesis. Its pathway is lipid metabolism; fatty acid metabolism. It functions in the pathway cofactor metabolism; retinol metabolism. A cytochrome P450 monooxygenase involved in the metabolism of various endogenous substrates, including fatty acids, steroid hormones and vitamins. Mechanistically, uses molecular oxygen inserting one oxygen atom into a substrate, and reducing the second into a water molecule, with two electrons provided by NADPH via cytochrome P450 reductase (CPR; NADPH-ferrihemoprotein reductase). Catalyzes the hydroxylation of carbon-hydrogen bonds. Exhibits high catalytic activity for the formation of hydroxyestrogens from estrone (E1) and 17beta-estradiol (E2), namely 2-hydroxy E1 and E2, as well as D-ring hydroxylated E1 and E2 at the C15alpha and C16alpha positions. Displays different regioselectivities for polyunsaturated fatty acids (PUFA) hydroxylation. Catalyzes the epoxidation of double bonds of certain PUFA. Converts arachidonic acid toward epoxyeicosatrienoic acid (EET) regioisomers, 8,9-, 11,12-, and 14,15-EET, that function as lipid mediators in the vascular system. Displays an absolute stereoselectivity in the epoxidation of eicosapentaenoic acid (EPA) producing the 17(R),18(S) enantiomer. May play an important role in all-trans retinoic acid biosynthesis in extrahepatic tissues. Catalyzes two successive oxidative transformation of all-trans retinol to all-trans retinal and then to the active form all-trans retinoic acid. May also participate in eicosanoids metabolism by converting hydroperoxide species into oxo metabolites (lipoxygenase-like reaction, NADPH-independent). This Cavia porcellus (Guinea pig) protein is Cytochrome P450 1A1 (CYP1A1).